The chain runs to 147 residues: UPF0306 protein YhbP (147 aa).

The protein belongs to the UPF0306 family.

This is UPF0306 protein YhbP from Escherichia fergusonii (strain ATCC 35469 / DSM 13698 / CCUG 18766 / IAM 14443 / JCM 21226 / LMG 7866 / NBRC 102419 / NCTC 12128 / CDC 0568-73).